Consider the following 502-residue polypeptide: 2,3-bisphosphoglycerate-independent phosphoglycerate mutase (502 aa).

Asp-13 and Ser-63 together coordinate Mn(2+). Ser-63 serves as the catalytic Phosphoserine intermediate. Residues His-117, 146-147, Arg-177, Arg-183, 251-254, and Lys-324 contribute to the substrate site; these read RD and RSDR. Residues Asp-389, His-393, Asp-430, His-431, and His-448 each contribute to the Mn(2+) site.

The protein belongs to the BPG-independent phosphoglycerate mutase family. As to quaternary structure, monomer. The cofactor is Mn(2+).

The enzyme catalyses (2R)-2-phosphoglycerate = (2R)-3-phosphoglycerate. It participates in carbohydrate degradation; glycolysis; pyruvate from D-glyceraldehyde 3-phosphate: step 3/5. Catalyzes the interconversion of 2-phosphoglycerate and 3-phosphoglycerate. The protein is 2,3-bisphosphoglycerate-independent phosphoglycerate mutase of Ureaplasma urealyticum serovar 10 (strain ATCC 33699 / Western).